We begin with the raw amino-acid sequence, 367 residues long: Histidinol-phosphate aminotransferase (367 aa).

Position 222 is an N6-(pyridoxal phosphate)lysine (K222).

The protein belongs to the class-II pyridoxal-phosphate-dependent aminotransferase family. Histidinol-phosphate aminotransferase subfamily. Pyridoxal 5'-phosphate serves as cofactor.

The catalysed reaction is L-histidinol phosphate + 2-oxoglutarate = 3-(imidazol-4-yl)-2-oxopropyl phosphate + L-glutamate. It functions in the pathway amino-acid biosynthesis; L-histidine biosynthesis; L-histidine from 5-phospho-alpha-D-ribose 1-diphosphate: step 7/9. The polypeptide is Histidinol-phosphate aminotransferase (Methanosphaera stadtmanae (strain ATCC 43021 / DSM 3091 / JCM 11832 / MCB-3)).